Consider the following 896-residue polypeptide: Probable DNA-directed RNA polymerase (896 aa).

Active-site residues include Asp-546, Lys-617, and Asp-798.

The protein belongs to the phage and mitochondrial RNA polymerase family.

Its subcellular location is the mitochondrion. It carries out the reaction RNA(n) + a ribonucleoside 5'-triphosphate = RNA(n+1) + diphosphate. Functionally, DNA-dependent RNA polymerase catalyzes the transcription of DNA into RNA using the four ribonucleoside triphosphates as substrates. The protein is Probable DNA-directed RNA polymerase of Neurospora crassa.